We begin with the raw amino-acid sequence, 559 residues long: Membrane protein insertase YidC (559 aa).

The helical transmembrane segment at Ile-7–Gln-24 threads the bilayer. 2 stretches are compositionally biased toward low complexity: residues Ala-45 to Gly-55 and Gln-63 to Ala-82. A disordered region spans residues Ala-45–Ala-82. The next 5 membrane-spanning stretches (helical) occupy residues Leu-338–Leu-358, Phe-364–Phe-384, Leu-434–Leu-454, Leu-472–Gln-492, and Val-507–Val-527.

This sequence belongs to the OXA1/ALB3/YidC family. Type 1 subfamily. In terms of assembly, interacts with the Sec translocase complex via SecD. Specifically interacts with transmembrane segments of nascent integral membrane proteins during membrane integration.

The protein localises to the cell inner membrane. Functionally, required for the insertion and/or proper folding and/or complex formation of integral membrane proteins into the membrane. Involved in integration of membrane proteins that insert both dependently and independently of the Sec translocase complex, as well as at least some lipoproteins. Aids folding of multispanning membrane proteins. The chain is Membrane protein insertase YidC from Cupriavidus taiwanensis (strain DSM 17343 / BCRC 17206 / CCUG 44338 / CIP 107171 / LMG 19424 / R1) (Ralstonia taiwanensis (strain LMG 19424)).